We begin with the raw amino-acid sequence, 211 residues long: Thymidylate kinase (211 aa).

10–17 (GVEGCGKT) provides a ligand contact to ATP.

The protein belongs to the thymidylate kinase family.

The enzyme catalyses dTMP + ATP = dTDP + ADP. Its function is as follows. Phosphorylation of dTMP to form dTDP in both de novo and salvage pathways of dTTP synthesis. In Trichormus variabilis (strain ATCC 29413 / PCC 7937) (Anabaena variabilis), this protein is Thymidylate kinase.